The sequence spans 349 residues: MFRKLLKMWILLRPTHWLILIALCAVTCAGYWLLWSEIRLEHAFKPLSKLGDSLSPDQHASSTTDDFDFEEHLVVLYNRVPKTGSTSFVNIAYDLCKPNKFHVLHINVTANMHVLSLPNQIQFVRNVSRWHEMKPALYHGHMAFLDFSKFQIAHKPIYINLVRKPLDRLVSYYYFLRFGDNYRPNLVRKKAGNKITFDECVVQKQPDCDPKNMWLQIPFFCGHAAECWEPGSSWALDQAKRNLVNEYFLVGVTEQMYEFVDLLERSLPRIFHGFREHYHNSNKSHLRVTSSKLPPSESTIKSIQKTKIWQMENDLYDFALAQFEFNKKKLMQPDNKHVQKFMYEKIRPK.

Topologically, residues 1-17 are cytoplasmic; that stretch reads MFRKLLKMWILLRPTHW. Residues 18-38 form a helical; Signal-anchor for type II membrane protein membrane-spanning segment; the sequence is LILIALCAVTCAGYWLLWSEI. At 39-349 the chain is on the lumenal side; the sequence is RLEHAFKPLS…KFMYEKIRPK (311 aa). 2 N-linked (GlcNAc...) asparagine glycosylation sites follow: Asn-107 and Asn-126. Catalysis depends on residues His-139 and His-141. 2 cysteine pairs are disulfide-bonded: Cys-200–Cys-208 and Cys-221–Cys-227. An N-linked (GlcNAc...) asparagine glycan is attached at Asn-282.

This sequence belongs to the sulfotransferase 3 family. Homotrimer.

It localises to the golgi apparatus membrane. Catalyzes the transfer of sulfate to the C2-position of selected hexuronic acid residues within the maturing heparan sulfate (HS). The protein is Heparin sulfate O-sulfotransferase of Drosophila melanogaster (Fruit fly).